The primary structure comprises 338 residues: MRVLGIETSCDETGIAVYDDKLGLLSHALYSQVKLHADYGGVVPELASRDHVRKIVPLIRQALKNANTEIADLDGIAYTKGPGLIGALLVGACVGRSLAFAWNKPAIGVHHMEGHLLAPMLEDDAPEFPFVALLVSGGHSMLVKVDGIGLYEVLGESVDDAAGEAFDKTAKLMGLDYPGGPRLAKLAAKGEPAGYQFPRPMTDRPGLDFSFSGLKTFTANTIAAEPDDEQTRANIARAFEEAVVDTLAIKCRRALKQTGYNRLVIAGGVSANTRLRETLAEMMTSIGGRVYYPRGEFCTDNGAMIAFAGLQRLKAGQQEDLAVKGQPRWPLDTLPPVA.

Positions 111 and 115 each coordinate Fe cation. Substrate-binding positions include 134-138, D167, G180, and N272; that span reads LVSGG. D300 is a Fe cation binding site.

Belongs to the KAE1 / TsaD family. It depends on Fe(2+) as a cofactor.

The protein resides in the cytoplasm. The catalysed reaction is L-threonylcarbamoyladenylate + adenosine(37) in tRNA = N(6)-L-threonylcarbamoyladenosine(37) in tRNA + AMP + H(+). In terms of biological role, required for the formation of a threonylcarbamoyl group on adenosine at position 37 (t(6)A37) in tRNAs that read codons beginning with adenine. Is involved in the transfer of the threonylcarbamoyl moiety of threonylcarbamoyl-AMP (TC-AMP) to the N6 group of A37, together with TsaE and TsaB. TsaD likely plays a direct catalytic role in this reaction. The sequence is that of tRNA N6-adenosine threonylcarbamoyltransferase from Shewanella sp. (strain ANA-3).